The primary structure comprises 158 residues: SUMO-conjugating enzyme UBC9 (158 aa).

Residues 4-157 (IALSRLAQER…VRAQAKKFSP (154 aa)) form the UBC core domain. The interaction with sumo1 stretch occupies residues 13 to 18 (RKAWRK). The active-site Glycyl thioester intermediate is the Cys93.

This sequence belongs to the ubiquitin-conjugating enzyme family. In terms of assembly, forms a tight complex with RANGAP1 and RANBP2.

It localises to the nucleus. The protein operates within protein modification; protein sumoylation. In terms of biological role, accepts the ubiquitin-like proteins SUMO1, SUMO2 and SUMO3 from the UBLE1A-UBLE1B E1 complex and catalyzes their covalent attachment to other proteins with the help of an E3 ligase such as RANBP2 or CBX4. Essential for nuclear architecture and chromosome segregation. The chain is SUMO-conjugating enzyme UBC9 (ube2i) from Pagrus major (Red sea bream).